We begin with the raw amino-acid sequence, 663 residues long: MRLRTSLGVASACASVASAALKVTEDNSTITLANDRLTSTFAKDKGRVSELFLDGQDLLGPISGNTGVGPYLDCYCIPSGFYTAGSTDPRLEVVQGTDSTGTKYAGVILNDTYTPTGQQFQQYWFLRDGETGLHTFSRLAYYNETTPFLRNLQEFRTLFRPNTELWTHLTSSEAQTAPLPSKEAIANEVVVQDATWRFNNTPNDAYYTQFSEYFTKYTFSNLWRDNSVHGLYADGTNSNGTTYGAWLVMNTKDTYYGGPLHSDLTVDGIVYNYLVSNHHGEGTPNITNGFDRTFGPQYYLFNGGKGSKSSLEDLRSEAETLADPGWNADFYDSIAKHVIGYAPSSKRGSVQGQVKLPKGSTRPIAILTVDGQYFQDNSVEASSHQYWAEMGQDGTFQLDHVKEGKYRLTVFADGIFGDFVHDGVEVQAGKVTKVQETWEQESAGVEVWRLGTPDKSSGEFLHGDAPDPTHPLHPPQHFIYWGAYDWQQDFPNGVNYTIGSSDPAVDFNTVHWSVYGPTPANPDVEYDTTHDWTINFSLDKKQLQQRKTATLTIQLAGAKTAAGNTDVYNATEPYANLALESYINEQKEPLTLLVGFNQSSSCIVRSAVSCYQVRSRMEFPADWLNVGNNVLTLHLPRNATDYETAVLPGTVYVQYDALRLELA.

A signal peptide spans 1–19 (MRLRTSLGVASACASVASA). N-linked (GlcNAc...) asparagine glycosylation is found at N27, N110, N143, N239, N285, N495, N535, N569, N597, and N638.

The protein belongs to the polysaccharide lyase 4 family.

The protein resides in the secreted. It carries out the reaction Endotype eliminative cleavage of L-alpha-rhamnopyranosyl-(1-&gt;4)-alpha-D-galactopyranosyluronic acid bonds of rhamnogalacturonan I domains in ramified hairy regions of pectin leaving L-rhamnopyranose at the reducing end and 4-deoxy-4,5-unsaturated D-galactopyranosyluronic acid at the non-reducing end.. Functionally, pectinolytic enzymes consist of four classes of enzymes: pectin lyase, polygalacturonase, pectin methylesterase and rhamnogalacturonase. Degrades the rhamnogalacturonan I (RG-I) backbone of pectin. The polypeptide is Probable rhamnogalacturonate lyase B (rglB) (Aspergillus flavus (strain ATCC 200026 / FGSC A1120 / IAM 13836 / NRRL 3357 / JCM 12722 / SRRC 167)).